We begin with the raw amino-acid sequence, 203 residues long: MAEGPLEAPFWRKGLLVAGLDEAGRGAWAGPIVVGAVVLPPGEYPFRDSKLLSPKARERLAEKVKEVALAFALGVAEAAEVDRLGVLKATLLAAERALLSLPLAPEALVTDYLPLPTPLPLLSPPKADEKSPTVAAASILAKVHRDRIMDELDRLYPGYGFARHKGYGTQEHQEALLALGPSPVHRKRFAPVAQAPLRFPEAP.

The RNase H type-2 domain occupies 15 to 201 (LLVAGLDEAG…VAQAPLRFPE (187 aa)). 3 residues coordinate a divalent metal cation: aspartate 21, glutamate 22, and aspartate 111.

It belongs to the RNase HII family. It depends on Mn(2+) as a cofactor. Requires Mg(2+) as cofactor.

The protein resides in the cytoplasm. It carries out the reaction Endonucleolytic cleavage to 5'-phosphomonoester.. In terms of biological role, endonuclease that specifically degrades the RNA of RNA-DNA hybrids. The protein is Ribonuclease HII of Thermus thermophilus (strain ATCC 27634 / DSM 579 / HB8).